We begin with the raw amino-acid sequence, 812 residues long: NKSRKRRNRVSFLGVTTVEPPKPIPLTWKTEKLVWVNQWPLPKQKLEALHLLANEQLEKGHIEPSFSPWNSPVFVIQKKSSKWRMLTDLRAVNAVIQPMGPLQPGLPSPAMIPKDWPLIIIDLKDCFFTIPLAEQDCEKFAFTIPAINNKEPATRFQWKVLPQGMLNSPTICQTFVGRALQPVRDKFSDCYIIHYFDDILCAAETKDKLIDCYTFLQAEVANAGLAIASDKIQTSTPFHYLGMQIENRKIKPQKIEIRKDTLKTLNDFQKLLGDINWIRPTLGIPTYAMSNLFSILRGDSDLNSKRMLTPEATKEIKLVEEKIQSAQINRIDPLAPLQLLIFATAHSPTGIIIQNTDLVEWSFLPHSTVKTFTLYLDQIATLIGPTRLRIIKLCGNDPDKIVVPLTKEQVRQAFINSGAWQIGLANFVGIIDNHYPKTKIFQFLKLTTWILPKITRREPLENALTVFTDGSSNGKVAYTGPKERVIKTPYQSAQRAELVAVITVLQDFDQPINIISDSAYVVQATRDVETALIKYSMDDQLNQLFNLLQQTVRKRNFPFYITHIRAHTNLPGPLTKANEQADLLVSSAFIKAQELHALTHVNAAGLKNKFDVTWKQAKDIVQHCTQCQVLDLPTQEAGVNPEVCVLMHYGKWMSHMYLHLGRLSYVHVTVDTYSHFMCATCQTGESTSHVKKHLLSCFAVMGVPEKIKTDNGPGYCSKAFQKFLSQWKISHTTGIPYNSQGQAIVERTNRTLKTQLVKQKEGGDSKECTTPQMQLNLALYTLNFLNIYRNQTTTSAEHLTGKKNSPHEGKLI.

Residues 57–245 form the Reverse transcriptase domain; sequence LEKGHIEPSF…TPFHYLGMQI (189 aa). The short motif at 161–164 is the LPQG element; sequence LPQG. Positions 195 to 198 match the YXDD motif; it reads YFDD. The 131-residue stretch at 460–590 folds into the RNase H type-1 domain; sequence LENALTVFTD…ADLLVSSAFI (131 aa). Residues Asp469, Glu497, Asp517, and Asp582 each contribute to the Mg(2+) site. An Integrase-type zinc finger spans residues 587 to 628; sequence SAFIKAQELHALTHVNAAGLKNKFDVTWKQAKDIVQHCTQCQ. Zn(2+) contacts are provided by His596, His600, Cys624, and Cys627. The 167-residue stretch at 637 to 803 folds into the Integrase catalytic domain; it reads AGVNPEVCVL…TSAEHLTGKK (167 aa).

The protein belongs to the beta type-B retroviral polymerase family. HERV class-II K(HML-2) pol subfamily.

It catalyses the reaction DNA(n) + a 2'-deoxyribonucleoside 5'-triphosphate = DNA(n+1) + diphosphate. The enzyme catalyses Endonucleolytic cleavage to 5'-phosphomonoester.. In terms of biological role, early post-infection, the reverse transcriptase converts the viral RNA genome into double-stranded viral DNA. The RNase H domain of the reverse transcriptase performs two functions. It degrades the RNA template and specifically removes the RNA primer from the RNA/DNA hybrid. Following nuclear import, the integrase catalyzes the insertion of the linear, double-stranded viral DNA into the host cell chromosome. Endogenous Pol proteins may have kept, lost or modified their original function during evolution. The polypeptide is Endogenous retrovirus group K member 18 Pol protein (ERVK-18) (Homo sapiens (Human)).